Here is a 101-residue protein sequence, read N- to C-terminus: Small ribosomal subunit protein uS10 (101 aa).

It belongs to the universal ribosomal protein uS10 family. Part of the 30S ribosomal subunit.

Involved in the binding of tRNA to the ribosomes. The chain is Small ribosomal subunit protein uS10 from Ureaplasma parvum serovar 3 (strain ATCC 27815 / 27 / NCTC 11736).